The chain runs to 533 residues: Peptide chain release factor 3 (533 aa).

The tr-type G domain maps to 9–284 (ARRRTFAIIS…ALCQLSPPPL (276 aa)). GTP is bound by residues 18-25 (SHPDAGKT), 95-99 (DTPGH), and 149-152 (NKLD).

It belongs to the TRAFAC class translation factor GTPase superfamily. Classic translation factor GTPase family. PrfC subfamily.

The protein resides in the cytoplasm. Functionally, increases the formation of ribosomal termination complexes and stimulates activities of RF-1 and RF-2. It binds guanine nucleotides and has strong preference for UGA stop codons. It may interact directly with the ribosome. The stimulation of RF-1 and RF-2 is significantly reduced by GTP and GDP, but not by GMP. The protein is Peptide chain release factor 3 of Cupriavidus pinatubonensis (strain JMP 134 / LMG 1197) (Cupriavidus necator (strain JMP 134)).